Consider the following 547-residue polypeptide: Inositol-tetrakisphosphate 1-kinase 6 (547 aa).

K263 lines the 1D-myo-inositol 1,3,4-trisphosphate pocket. The ATP site is built by R317 and K370. The region spanning 327–539 is the ATP-grasp domain; that stretch reads LEGLSAEGRP…FWDAIKQSYE (213 aa). Residues H381 and K415 each contribute to the 1D-myo-inositol 1,3,4-trisphosphate site. ATP contacts are provided by residues 404–415, S430, and S450; that span reads QEYIDHGSKIFK. Residues D497, D511, and N513 each contribute to the Mg(2+) site. 1D-myo-inositol 1,3,4-trisphosphate contacts are provided by N513 and S517.

It belongs to the ITPK1 family. Monomer. Mg(2+) is required as a cofactor.

It carries out the reaction 1D-myo-inositol 3,4,5,6-tetrakisphosphate + ATP = 1D-myo-inositol 1,3,4,5,6-pentakisphosphate + ADP + H(+). The catalysed reaction is 1D-myo-inositol 1,3,4-trisphosphate + ATP = 1D-myo-inositol 1,3,4,5-tetrakisphosphate + ADP + H(+). The enzyme catalyses 1D-myo-inositol 1,3,4-trisphosphate + ATP = 1D-myo-inositol 1,3,4,6-tetrakisphosphate + ADP + H(+). Kinase that can phosphorylate various inositol polyphosphate such as Ins(3,4,5,6)P4 or Ins(1,3,4)P3 and participates in phytic acid biosynthesis in developing seeds. Phytic acid is the primary storage form of phosphorus in cereal grains and other plant seeds. The protein is Inositol-tetrakisphosphate 1-kinase 6 of Oryza sativa subsp. indica (Rice).